The chain runs to 556 residues: 2-isopropylmalate synthase (556 aa).

In terms of domain architecture, Pyruvate carboxyltransferase spans P33 to D307. Mg(2+) contacts are provided by D42, H246, H248, and N282. The regulatory domain stretch occupies residues A439–A556.

Belongs to the alpha-IPM synthase/homocitrate synthase family. LeuA type 2 subfamily. Homodimer. Mg(2+) is required as a cofactor.

The protein resides in the cytoplasm. The catalysed reaction is 3-methyl-2-oxobutanoate + acetyl-CoA + H2O = (2S)-2-isopropylmalate + CoA + H(+). It participates in amino-acid biosynthesis; L-leucine biosynthesis; L-leucine from 3-methyl-2-oxobutanoate: step 1/4. Catalyzes the condensation of the acetyl group of acetyl-CoA with 3-methyl-2-oxobutanoate (2-ketoisovalerate) to form 3-carboxy-3-hydroxy-4-methylpentanoate (2-isopropylmalate). This chain is 2-isopropylmalate synthase, found in Pseudomonas paraeruginosa (strain DSM 24068 / PA7) (Pseudomonas aeruginosa (strain PA7)).